The following is a 347-amino-acid chain: VIP36-like protein (347 aa).

Positions 1–43 are cleaved as a signal peptide; sequence MAAASRPSWWQRWRRRAWARDGAKLLLFLLLLGSGPGPRHVRA. Over 44-312 the chain is Lumenal; that stretch reads GQAVEYLKRE…VPPTPLSGLA (269 aa). Residues 48 to 273 form the L-type lectin-like domain; sequence EYLKREHSLS…DVISLKLFEL (226 aa). Ser-92 and Asp-127 together coordinate a carbohydrate. Ca(2+) contacts are provided by Asp-158, Tyr-160, and Asn-162. 160–162 serves as a coordination point for a carbohydrate; sequence YPN. The N-linked (GlcNAc...) asparagine glycan is linked to Asn-180. His-187 is an a carbohydrate binding site. Asp-190 provides a ligand contact to Ca(2+). A disulfide bridge links Cys-199 with Cys-236. 257–259 is a binding site for a carbohydrate; it reads GDL. A helical transmembrane segment spans residues 313 to 335; the sequence is LFLIVFFSLVFSVFAIVIGIILY. At 336–347 the chain is on the cytoplasmic side; sequence NKWQDQSRKRFY. Positions 343 to 345 match the Endoplasmic reticulum retention signal motif; the sequence is RKR.

The protein resides in the endoplasmic reticulum membrane. Its subcellular location is the golgi apparatus membrane. May be involved in the regulation of export from the endoplasmic reticulum of a subset of glycoproteins. May function as a regulator of ERGIC-53. This Mus musculus (Mouse) protein is VIP36-like protein (Lman2l).